Reading from the N-terminus, the 525-residue chain is Peptide chain release factor 3 (525 aa).

Residues 11 to 279 (ERRRTFAIIS…AFVDMAPAPE (269 aa)) enclose the tr-type G domain. GTP contacts are provided by residues 20-27 (SHPDAGKT), 88-92 (DTPGH), and 142-145 (NKLD).

Belongs to the TRAFAC class translation factor GTPase superfamily. Classic translation factor GTPase family. PrfC subfamily.

It is found in the cytoplasm. Increases the formation of ribosomal termination complexes and stimulates activities of RF-1 and RF-2. It binds guanine nucleotides and has strong preference for UGA stop codons. It may interact directly with the ribosome. The stimulation of RF-1 and RF-2 is significantly reduced by GTP and GDP, but not by GMP. The chain is Peptide chain release factor 3 from Latilactobacillus sakei subsp. sakei (strain 23K) (Lactobacillus sakei subsp. sakei).